The primary structure comprises 100 residues: Small ribosomal subunit protein uS14 (100 aa).

The protein belongs to the universal ribosomal protein uS14 family. As to quaternary structure, part of the 30S ribosomal subunit. Contacts proteins S3 and S10.

Binds 16S rRNA, required for the assembly of 30S particles and may also be responsible for determining the conformation of the 16S rRNA at the A site. This chain is Small ribosomal subunit protein uS14, found in Synechococcus sp. (strain CC9605).